The primary structure comprises 320 residues: tRNA uridine(34) hydroxylase (320 aa).

Residues 123 to 217 (EDENTVILDA…YGKDPETKGQ (95 aa)) form the Rhodanese domain. The active-site Cysteine persulfide intermediate is the cysteine 177.

It belongs to the TrhO family.

The enzyme catalyses uridine(34) in tRNA + AH2 + O2 = 5-hydroxyuridine(34) in tRNA + A + H2O. Functionally, catalyzes oxygen-dependent 5-hydroxyuridine (ho5U) modification at position 34 in tRNAs. In Staphylococcus epidermidis (strain ATCC 12228 / FDA PCI 1200), this protein is tRNA uridine(34) hydroxylase.